Here is a 238-residue protein sequence, read N- to C-terminus: ATP synthase subunit a (238 aa).

4 consecutive transmembrane segments (helical) span residues 17-37 (LSNI…AIIC), 80-100 (ITLL…QIAI), 112-132 (DPIV…YYGI), and 194-214 (IFVG…SIFI).

This sequence belongs to the ATPase A chain family. F-type ATPases have 2 components, CF(1) - the catalytic core - and CF(0) - the membrane proton channel. CF(1) has five subunits: alpha(3), beta(3), gamma(1), delta(1), epsilon(1). CF(0) has three main subunits: a(1), b(2) and c(9-12). The alpha and beta chains form an alternating ring which encloses part of the gamma chain. CF(1) is attached to CF(0) by a central stalk formed by the gamma and epsilon chains, while a peripheral stalk is formed by the delta and b chains.

Its subcellular location is the cell membrane. Functionally, key component of the proton channel; it plays a direct role in the translocation of protons across the membrane. The protein is ATP synthase subunit a of Listeria innocua serovar 6a (strain ATCC BAA-680 / CLIP 11262).